We begin with the raw amino-acid sequence, 146 residues long: 3-dehydroquinate dehydratase (146 aa).

Catalysis depends on Y23, which acts as the Proton acceptor. Substrate contacts are provided by N74, H80, and D87. Residue H100 is the Proton donor of the active site. Substrate contacts are provided by residues 101 to 102 (IS) and R111.

Belongs to the type-II 3-dehydroquinase family. In terms of assembly, homododecamer.

The catalysed reaction is 3-dehydroquinate = 3-dehydroshikimate + H2O. Its pathway is metabolic intermediate biosynthesis; chorismate biosynthesis; chorismate from D-erythrose 4-phosphate and phosphoenolpyruvate: step 3/7. Catalyzes a trans-dehydration via an enolate intermediate. In Bacillus cytotoxicus (strain DSM 22905 / CIP 110041 / 391-98 / NVH 391-98), this protein is 3-dehydroquinate dehydratase.